Here is a 267-residue protein sequence, read N- to C-terminus: MEERHKCKLCWKSFANGRALGGHMRSHMLIHPLPSQPESYSSSMADPGFVLQDRESETESSKKPSRKRSRLNRRSISSLRHQQSNEEGKSETARAADIKIGVQELSESCTEQEPMSSVSDAATTEEDVALSLMLLSRDKWEKEEEESDEERWKKKRNKWFECETCEKVFKSYQALGGHRASHKKKIAETDQLGSDELKKKKKKSTSSHHECPICAKVFTSGQALGGHKRSHASANNEFTRRSGIIISLIDLNLPAPSEEEEMASSVF.

A C2H2-type 1 zinc finger spans residues H5–H27. 2 disordered regions span residues P34 to K99 and S181 to S204. The span at Q52–K62 shows a compositional bias: basic and acidic residues. The span at K63 to R73 shows a compositional bias: basic residues. Positions Q83–D97 are enriched in basic and acidic residues. C2H2-type zinc fingers lie at residues F160–H182 and H209–H231.

The protein resides in the nucleus. Its function is as follows. Probable transcription factor that may be involved in stress responses. The sequence is that of Zinc finger protein ZAT1 (ZAT1) from Arabidopsis thaliana (Mouse-ear cress).